An 81-amino-acid chain; its full sequence is Small ribosomal subunit protein bS16 (81 aa).

This sequence belongs to the bacterial ribosomal protein bS16 family.

This is Small ribosomal subunit protein bS16 from Agathobacter rectalis (strain ATCC 33656 / DSM 3377 / JCM 17463 / KCTC 5835 / VPI 0990) (Eubacterium rectale).